The following is a 120-amino-acid chain: Ribonuclease P protein component (120 aa).

Belongs to the RnpA family. In terms of assembly, consists of a catalytic RNA component (M1 or rnpB) and a protein subunit.

It carries out the reaction Endonucleolytic cleavage of RNA, removing 5'-extranucleotides from tRNA precursor.. In terms of biological role, RNaseP catalyzes the removal of the 5'-leader sequence from pre-tRNA to produce the mature 5'-terminus. It can also cleave other RNA substrates such as 4.5S RNA. The protein component plays an auxiliary but essential role in vivo by binding to the 5'-leader sequence and broadening the substrate specificity of the ribozyme. The polypeptide is Ribonuclease P protein component (Bordetella avium (strain 197N)).